We begin with the raw amino-acid sequence, 541 residues long: Testis-specific chromodomain protein Y 2 (541 aa).

Residues 6–66 (FEVEAIVDKR…RQTEKQKKLT (61 aa)) form the Chromo domain. Residues 72–104 (RIFSNNARRRTSRSTKANYSKNSPKTPVTDKHH) form a disordered region. Residues 87–97 (KANYSKNSPKT) are compositionally biased toward polar residues.

In terms of tissue distribution, testis specific.

Its subcellular location is the nucleus. The catalysed reaction is L-lysyl-[protein] + acetyl-CoA = N(6)-acetyl-L-lysyl-[protein] + CoA + H(+). Its function is as follows. May have histone acetyltransferase activity. The chain is Testis-specific chromodomain protein Y 2 (CDY2A) from Homo sapiens (Human).